A 174-amino-acid polypeptide reads, in one-letter code: UPF0113 protein AF_0058 (174 aa).

The 75-residue stretch at 87-161 (RNRVWVNERG…KVFVENLVDR (75 aa)) folds into the PUA domain.

Belongs to the UPF0113 family.

The protein is UPF0113 protein AF_0058 of Archaeoglobus fulgidus (strain ATCC 49558 / DSM 4304 / JCM 9628 / NBRC 100126 / VC-16).